The primary structure comprises 306 residues: Glutaminase (306 aa).

Substrate is bound by residues Ser62, Asn114, Glu159, Asn166, Tyr190, Tyr242, and Val260.

It belongs to the glutaminase family. Homotetramer.

It carries out the reaction L-glutamine + H2O = L-glutamate + NH4(+). This chain is Glutaminase, found in Clostridium tetani (strain Massachusetts / E88).